The following is a 232-amino-acid chain: Ion-translocating oxidoreductase complex subunit E (232 aa).

The next 6 helical transmembrane spans lie at 18-38 (GLVQLLGLCPLLAVTATLTNA), 39-59 (IGLGLATLVVLVGSNVLVSLV), 69-89 (IPVFVMIIAALVTCVQLLINA), 93-113 (GLYLSLGIFLPLIVTNCVIIG), 127-147 (AAFDGLMMGLGFTLVLMLLGA), and 182-202 (NFLLAMLPPGAFIAMGFLIAI).

This sequence belongs to the NqrDE/RnfAE family. As to quaternary structure, the complex is composed of six subunits: RnfA, RnfB, RnfC, RnfD, RnfE and RnfG.

The protein localises to the cell inner membrane. Part of a membrane-bound complex that couples electron transfer with translocation of ions across the membrane. In Shewanella loihica (strain ATCC BAA-1088 / PV-4), this protein is Ion-translocating oxidoreductase complex subunit E.